We begin with the raw amino-acid sequence, 454 residues long: uncharacterized protein (454 aa).

The signal sequence occupies residues 1 to 21; sequence MKYKTVKSIPLFLLGSIVFTA. Residue cysteine 22 is the site of N-palmitoyl cysteine attachment. Cysteine 22 carries the S-diacylglycerol cysteine lipid modification. Over residues 55 to 64 the composition is skewed to low complexity; it reads ASSSSSTTTS. The interval 55-87 is disordered; that stretch reads ASSSSSTTTSNDDNNQKGYFLETNRSTGTYDPN. Residues 65–87 are compositionally biased toward polar residues; sequence NDDNNQKGYFLETNRSTGTYDPN.

It is found in the cell membrane. This is an uncharacterized protein from Mycoplasma pneumoniae (strain ATCC 29342 / M129 / Subtype 1) (Mycoplasmoides pneumoniae).